Consider the following 591-residue polypeptide: Proteasome-associated ATPase (591 aa).

A coiled-coil region spans residues 10 to 77; it reads VAAAEELHAL…LREEVDRLGQ (68 aa). Residue 278-283 coordinates ATP; it reads GCGKTL. Residues 590–591 are docks into pockets in the proteasome alpha-ring; the sequence is YL.

The protein belongs to the AAA ATPase family. As to quaternary structure, homohexamer. Assembles into a hexameric ring structure that likely caps the 20S proteasome core. Can form a complex composed of two stacked hexameric rings in vitro. Probably interacts with the prokaryotic ubiquitin-like protein Pup through a hydrophobic interface; the expected interacting region of ARC lies in its N-terminal coiled-coil domain. There is likely one Pup binding site per ARC hexamer ring. Upon ATP-binding, the C-terminus of ARC probably interacts with the alpha-rings of the proteasome core, possibly by binding to the intersubunit pockets.

It participates in protein degradation; proteasomal Pup-dependent pathway. Its activity is regulated as follows. ATPase activity is inhibited by N-ethylmaleimide (NEM) but not by sodium azide. In terms of biological role, ATPase which is responsible for recognizing, binding, unfolding and translocation of pupylated proteins into the bacterial 20S proteasome core particle. May be essential for opening the gate of the 20S proteasome via an interaction with its C-terminus, thereby allowing substrate entry and access to the site of proteolysis. Thus, the C-termini of the proteasomal ATPase may function like a 'key in a lock' to induce gate opening and therefore regulate proteolysis. This is Proteasome-associated ATPase from Rhodococcus erythropolis (Arthrobacter picolinophilus).